Consider the following 92-residue polypeptide: Envelope glycoprotein J (92 aa).

Residues 1 to 21 (MSLRAVWHLGLLGSLVGAVLA) form the signal peptide. At 22–49 (ATHRGPAANTTDPLTHAPVSPHPSPLGG) the chain is on the extracellular side. N-linked (GlcNAc...) asparagine; by host glycosylation is present at Asn30. A helical membrane pass occupies residues 50-70 (FAVPLVVGGLCAVVLGAACLL). Residues 71 to 92 (ELLRRTCRGWGRYHPYMDPVVV) lie on the Cytoplasmic side of the membrane.

This sequence belongs to the alphaherpesvirinae glycoprotein J family.

It is found in the host Golgi apparatus membrane. Its subcellular location is the host endoplasmic reticulum membrane. The protein localises to the host endosome membrane. Its function is as follows. Inhibits host cell apoptosis. Induces an increase in reactive oxygen species (ROS) in the host cell. This chain is Envelope glycoprotein J (gJ), found in Homo sapiens (Human).